Consider the following 179-residue polypeptide: Translation initiation factor IF-3 (179 aa).

Belongs to the IF-3 family. Monomer.

Its subcellular location is the cytoplasm. In terms of biological role, IF-3 binds to the 30S ribosomal subunit and shifts the equilibrium between 70S ribosomes and their 50S and 30S subunits in favor of the free subunits, thus enhancing the availability of 30S subunits on which protein synthesis initiation begins. This is Translation initiation factor IF-3 from Proteus hauseri.